The following is a 678-amino-acid chain: RNA helicase NPH-II (678 aa).

The region spanning 175–351 (FESWIHHVPV…EFFTESVFVH (177 aa)) is the Helicase ATP-binding domain. 188-195 (GDTGVGKT) serves as a coordination point for ATP. The DEXH box motif lies at 300–303 (DEVH). One can recognise a Helicase C-terminal domain in the interval 371–546 (SLNKFMYIEE…VFDLQLPEDL (176 aa)).

It belongs to the DEAD box helicase family. DEAH subfamily. In terms of assembly, monomer.

The protein localises to the virion. It carries out the reaction ATP + H2O = ADP + phosphate + H(+). In terms of biological role, NTP-dependent helicase that catalyzes unidirectional unwinding of 3'tailed duplex RNAs and plays an important role during transcription of early mRNAs, presumably by preventing R-loop formation behind the elongating RNA polymerase. Might also play a role in the export of newly synthesized mRNA chains out of the core into the cytoplasm. Required for replication and propagation of viral particles. In Oryctolagus cuniculus (Rabbit), this protein is RNA helicase NPH-II (OPG084).